Reading from the N-terminus, the 381-residue chain is Succinyl-diaminopimelate desuccinylase (381 aa).

Residue histidine 71 coordinates Zn(2+). Residue aspartate 73 is part of the active site. Aspartate 104 serves as a coordination point for Zn(2+). Catalysis depends on glutamate 136, which acts as the Proton acceptor. 3 residues coordinate Zn(2+): glutamate 137, glutamate 166, and histidine 351.

Belongs to the peptidase M20A family. DapE subfamily. In terms of assembly, homodimer. It depends on Zn(2+) as a cofactor. Co(2+) is required as a cofactor.

The catalysed reaction is N-succinyl-(2S,6S)-2,6-diaminopimelate + H2O = (2S,6S)-2,6-diaminopimelate + succinate. Its pathway is amino-acid biosynthesis; L-lysine biosynthesis via DAP pathway; LL-2,6-diaminopimelate from (S)-tetrahydrodipicolinate (succinylase route): step 3/3. In terms of biological role, catalyzes the hydrolysis of N-succinyl-L,L-diaminopimelic acid (SDAP), forming succinate and LL-2,6-diaminopimelate (DAP), an intermediate involved in the bacterial biosynthesis of lysine and meso-diaminopimelic acid, an essential component of bacterial cell walls. The protein is Succinyl-diaminopimelate desuccinylase of Ehrlichia chaffeensis (strain ATCC CRL-10679 / Arkansas).